A 130-amino-acid polypeptide reads, in one-letter code: Ribonuclease P protein component (130 aa).

This sequence belongs to the RnpA family. Consists of a catalytic RNA component (M1 or rnpB) and a protein subunit.

It catalyses the reaction Endonucleolytic cleavage of RNA, removing 5'-extranucleotides from tRNA precursor.. RNaseP catalyzes the removal of the 5'-leader sequence from pre-tRNA to produce the mature 5'-terminus. It can also cleave other RNA substrates such as 4.5S RNA. The protein component plays an auxiliary but essential role in vivo by binding to the 5'-leader sequence and broadening the substrate specificity of the ribozyme. The chain is Ribonuclease P protein component from Psychrobacter sp. (strain PRwf-1).